The chain runs to 81 residues: uncharacterized protein (81 aa).

This sequence belongs to the ycf70 family.

The protein resides in the plastid. It is found in the chloroplast. This is an uncharacterized protein from Saccharum officinarum (Sugarcane).